We begin with the raw amino-acid sequence, 543 residues long: Tapetal oleosin GRP-17 (543 aa).

Residues 1 to 67 (MSEELSQKPS…FLMPLLEVIK (67 aa)) form a polar region. A run of 3 helical transmembrane segments spans residues 68–88 (IIIA…TLAG), 98–118 (PVFI…VVLA), and 119–139 (TGFT…MWLV). Residues 68-162 (IIIASVASVI…PAGLPPNSGA (95 aa)) are hydrophobic. Disordered stretches follow at residues 148–169 (KDNP…GAQS) and 195–543 (GGKK…HMAE). Residues 201–212 (SGGGKSKFGGKG) show a composition bias toward gly residues. 3 consecutive repeat copies span residues 220 to 223 (GMSS), 227 to 230 (GMSG), and 234 to 237 (GMSG). Low complexity predominate over residues 220–229 (GMSSGDEGMS). The 29 X 4 AA approximate tandem repeats of G-M-S-G stretch occupies residues 220–514 (GMSSGDEGMS…GGMSESGMSG (295 aa)). A compositionally biased stretch (gly residues) spans 230-240 (GSEGGMSGGEG). A compositionally biased stretch (basic residues) spans 244–256 (KSGKGKLKAKLEK). Tandem repeats lie at residues 259-262 (GMSG), 269-272 (GMSG), 276-279 (GMSG), 301-304 (GMSG), 305-308 (GMSG), 312-315 (GMSG), 319-322 (GMSS), 344-347 (SMSG), 348-351 (GMSG), 355-358 (GMSG), 362-365 (GMSG), 387-390 (CMSG), 391-394 (GMSG), 398-401 (GMSR), 405-408 (GISG), 410-413 (GMSG), 414-417 (GSGS), 438-441 (GMSG), 445-448 (GMSG), 458-461 (GSMS), 464-467 (GMSG), 468-471 (GSGS), 492-495 (GMSG), 499-502 (GMSG), 506-509 (GMSE), and 511-514 (GMSG). A compositionally biased stretch (gly residues) spans 272-283 (GSEGGMSGGGGS). Basic residues predominate over residues 285–301 (SKSKKSKLKAKLGKKKG). Gly residues predominate over residues 315-326 (GSEGGMSSGGGS). The segment covering 328 to 344 (SKSKKSKLKAKLGKKKS) has biased composition (basic residues). Residues 345 to 357 (MSGGMSGSEEGMS) show a composition bias toward low complexity. Over residues 358–370 (GSEGGMSGGGGGK) the composition is skewed to gly residues. The segment covering 371–387 (SKSRKSKLKANLGKKKC) has biased composition (basic residues). Gly residues-rich tracts occupy residues 405 to 416 (GISGGGMSGGSG) and 440 to 470 (SGSG…GGSG). Basic residues predominate over residues 471–492 (SKHKIGGGKHGGLRGKFGKKRG). The span at 495-505 (GSEGGMSGSEG) shows a compositional bias: gly residues. Over residues 518 to 531 (GKHKIGGGKHKFGG) the composition is skewed to basic residues. Gly residues predominate over residues 532–543 (GKHGGGGGHMAE).

Belongs to the oleosin family. Post-translationally, proteolytically cleaved following anther tapetal breakdown. In terms of tissue distribution, flower specific, especially in anther tapetum, pollen (at protein level) and flowers florets.

The protein resides in the secreted. It localises to the extracellular space. The protein localises to the extracellular matrix. It is found in the pollen coat. Its subcellular location is the lipid droplet. The protein resides in the membrane. Functionally, lipid-binding oleosin pollen coat protein required to mediate pollen recognition by stigma cells and subsequent pollen hydration. Involved in anther tapetum development, especially for the physiology of tapetosomes. Also implicated in the formation of pollen coat. The chain is Tapetal oleosin GRP-17 from Arabidopsis thaliana (Mouse-ear cress).